The chain runs to 151 residues: UPF0208 membrane protein KPN78578_26420 (151 aa).

A run of 2 helical transmembrane segments spans residues 46–65 and 69–91; these read YAIRIMPPIAIFTLCWQIAL and LGPAVATALFALSLPMQGLWWLG.

The protein belongs to the UPF0208 family.

Its subcellular location is the cell inner membrane. The sequence is that of UPF0208 membrane protein KPN78578_26420 from Klebsiella pneumoniae subsp. pneumoniae (strain ATCC 700721 / MGH 78578).